Here is a 193-residue protein sequence, read N- to C-terminus: Peptidyl-tRNA hydrolase 1 (193 aa).

Y27 is a binding site for tRNA. H32 serves as the catalytic Proton acceptor. Residues F80, N82, and N128 each coordinate tRNA.

Belongs to the PTH family. As to quaternary structure, monomer.

Its subcellular location is the cytoplasm. The catalysed reaction is an N-acyl-L-alpha-aminoacyl-tRNA + H2O = an N-acyl-L-amino acid + a tRNA + H(+). In terms of biological role, hydrolyzes ribosome-free peptidyl-tRNAs (with 1 or more amino acids incorporated), which drop off the ribosome during protein synthesis, or as a result of ribosome stalling. Catalyzes the release of premature peptidyl moieties from peptidyl-tRNA molecules trapped in stalled 50S ribosomal subunits, and thus maintains levels of free tRNAs and 50S ribosomes. In Corynebacterium jeikeium (strain K411), this protein is Peptidyl-tRNA hydrolase 1.